Here is a 258-residue protein sequence, read N- to C-terminus: Imidazole glycerol phosphate synthase subunit HisF (258 aa).

Catalysis depends on residues Asp11 and Asp130.

Belongs to the HisA/HisF family. As to quaternary structure, heterodimer of HisH and HisF.

The protein localises to the cytoplasm. The catalysed reaction is 5-[(5-phospho-1-deoxy-D-ribulos-1-ylimino)methylamino]-1-(5-phospho-beta-D-ribosyl)imidazole-4-carboxamide + L-glutamine = D-erythro-1-(imidazol-4-yl)glycerol 3-phosphate + 5-amino-1-(5-phospho-beta-D-ribosyl)imidazole-4-carboxamide + L-glutamate + H(+). It participates in amino-acid biosynthesis; L-histidine biosynthesis; L-histidine from 5-phospho-alpha-D-ribose 1-diphosphate: step 5/9. Its function is as follows. IGPS catalyzes the conversion of PRFAR and glutamine to IGP, AICAR and glutamate. The HisF subunit catalyzes the cyclization activity that produces IGP and AICAR from PRFAR using the ammonia provided by the HisH subunit. The sequence is that of Imidazole glycerol phosphate synthase subunit HisF from Lachnoclostridium phytofermentans (strain ATCC 700394 / DSM 18823 / ISDg) (Clostridium phytofermentans).